Reading from the N-terminus, the 161-residue chain is Allophycocyanin alpha subunit (161 aa).

Cysteine 81 serves as a coordination point for (2R,3E)-phycocyanobilin.

Belongs to the phycobiliprotein family. In terms of assembly, heterodimer of an alpha and a beta chain. Post-translationally, contains one covalently linked phycocyanobilin chromophore. The chromophore on position 81 is added by the phycocyanobilin lyase CpcUS.

The protein localises to the cellular thylakoid membrane. Its function is as follows. Light-harvesting photosynthetic bile pigment-protein from the phycobiliprotein complex. Allophycocyanin has a maximum absorption at approximately 650 nanometers. This chain is Allophycocyanin alpha subunit (apcA), found in Picosynechococcus sp. (strain ATCC 27264 / PCC 7002 / PR-6) (Agmenellum quadruplicatum).